We begin with the raw amino-acid sequence, 960 residues long: FYVE, RhoGEF and PH domain-containing protein 1 (960 aa).

Disordered regions lie at residues 1-210 (MHGH…SSAA) and 226-355 (ASDR…REIP). Residue Ser-48 is modified to Phosphoserine. Positions 125–135 (PHPEGPQRLRS) are enriched in basic and acidic residues. Pro residues-rich tracts occupy residues 137–149 (PGPPTEIPGPRPS), 156–165 (GPKPQVPPKP), and 173–190 (VLPPPEPIPPPPSRPLPA). An SH3-binding motif is present at residues 171–187 (PRVLPPPEPIPPPPSRP). Ser-205 is subject to Phosphoserine. The span at 231–251 (APGPCPVPPEPAMLPQPPPQP) shows a compositional bias: pro residues. A compositionally biased stretch (basic and acidic residues) spans 273–284 (RDGEKVPNRDSG). The segment covering 285 to 294 (IDSISSPSNS) has biased composition (low complexity). Residues 335-350 (VDSDLEEEEEEEEEEK) are compositionally biased toward acidic residues. The DH domain occupies 372 to 560 (KVFHIANELL…ATAAEHSNAA (189 aa)). Positions 589 to 688 (ELIKEGHILK…WVQAINSTLL (100 aa)) constitute a PH 1 domain. Positions 701–725 (NSTNRDDEDTPPNSPNVDLGKRAPT) are disordered. Thr-710 is subject to Phosphothreonine. Ser-714 bears the Phosphoserine mark. An FYVE-type zinc finger spans residues 729 to 789 (EKEVTMCMRC…VCTDCYVALH (61 aa)). The Zn(2+) site is built by Cys-735, Cys-738, Cys-752, Cys-755, Cys-760, Cys-763, Cys-781, and Cys-784. In terms of domain architecture, PH 2 spans 820 to 920 (NSVICSFLHY…WMAVLGRAGR (101 aa)). The disordered stretch occupies residues 922–960 (DTFCPGPTLSEDKEMEETPVAASGATAEPPEASQTRDKT).

In terms of assembly, interacts with DBNL/ABP1 and CTTN. Binds CDC42. May interact with CCPG1.

The protein localises to the cytoplasm. The protein resides in the cell projection. Its subcellular location is the lamellipodium. It localises to the ruffle. It is found in the cytoskeleton. Activates CDC42, a member of the Ras-like family of Rho- and Rac proteins, by exchanging bound GDP for free GTP. Plays a role in regulating the actin cytoskeleton and cell shape. The polypeptide is FYVE, RhoGEF and PH domain-containing protein 1 (Fgd1) (Mus musculus (Mouse)).